A 171-amino-acid chain; its full sequence is Shikimate kinase (171 aa).

14–19 (GAGKST) contributes to the ATP binding site. S18 is a binding site for Mg(2+). D36, R60, and G82 together coordinate substrate. R120 contributes to the ATP binding site. A substrate-binding site is contributed by R139. An ATP-binding site is contributed by Q156.

The protein belongs to the shikimate kinase family. As to quaternary structure, monomer. Requires Mg(2+) as cofactor.

Its subcellular location is the cytoplasm. The catalysed reaction is shikimate + ATP = 3-phosphoshikimate + ADP + H(+). It functions in the pathway metabolic intermediate biosynthesis; chorismate biosynthesis; chorismate from D-erythrose 4-phosphate and phosphoenolpyruvate: step 5/7. Functionally, catalyzes the specific phosphorylation of the 3-hydroxyl group of shikimic acid using ATP as a cosubstrate. In Alteromonas mediterranea (strain DSM 17117 / CIP 110805 / LMG 28347 / Deep ecotype), this protein is Shikimate kinase.